Here is a 356-residue protein sequence, read N- to C-terminus: sn-glycerol-3-phosphate import ATP-binding protein UgpC (356 aa).

In terms of domain architecture, ABC transporter spans 4-235 (LKLQAVTKSW…PASLFVASFI (232 aa)). 37–44 (GPSGCGKS) contributes to the ATP binding site.

It belongs to the ABC transporter superfamily. sn-glycerol-3-phosphate importer (TC 3.A.1.1.3) family. In terms of assembly, the complex is composed of two ATP-binding proteins (UgpC), two transmembrane proteins (UgpA and UgpE) and a solute-binding protein (UgpB).

It localises to the cell inner membrane. The catalysed reaction is sn-glycerol 3-phosphate(out) + ATP + H2O = sn-glycerol 3-phosphate(in) + ADP + phosphate + H(+). It catalyses the reaction glycerol 2-phosphate(out) + ATP + H2O = glycerol 2-phosphate(in) + ADP + phosphate + H(+). Its activity is regulated as follows. ATPase activity is stimulated when UgpB is bound to G3P. Transport is inhibited in vivo by increasing levels of internal phosphate. However, ATPase activity in proteoliposomes is neither inhibited by phosphate nor by the signal transducing protein PhoU or the phosphodiesterase UgpQ. Activated by gluconate and inhibited by fumarate. Part of the ABC transporter complex UgpBAEC involved in sn-glycerol-3-phosphate (G3P) import. Responsible for energy coupling to the transport system. Can also transport glycerophosphoryl diesters, which are hydrolyzed to G3P and alcohol during transport. The G3P moiety can be detected in the cytoplasm whereas the corresponding alcohol is usually found in the culture medium. It was proposed by Yang et al that the complex could also transport glycerol-2-phosphate (G2P) in vivo, but it was shown later by Wuttge et al that UgpB does not bind G2P, questioning this transport activity. G2P might be converted in the periplasm to G3P before its transport. This Escherichia coli (strain K12) protein is sn-glycerol-3-phosphate import ATP-binding protein UgpC.